A 558-amino-acid polypeptide reads, in one-letter code: Germacrene A synthase short form (558 aa).

Residues Asp-311, Asp-315, Asp-455, Thr-459, and Glu-463 each coordinate Mg(2+). A DDXXD motif motif is present at residues Asp-311–Asp-315.

Belongs to the terpene synthase family. It depends on Mg(2+) as a cofactor. As to expression, expressed in roots and in green and etiolated seedlings.

It catalyses the reaction (2E,6E)-farnesyl diphosphate = (+)-(R)-germacrene A + diphosphate. It functions in the pathway secondary metabolite biosynthesis; terpenoid biosynthesis. Its function is as follows. Involved in sesquiterpene lactone biosynthesis. Produces exclusively (+)-germacrene A. This is Germacrene A synthase short form from Cichorium intybus (Chicory).